We begin with the raw amino-acid sequence, 763 residues long: MAP7 domain-containing protein 2 (763 aa).

Residues 1–11 (MERGGGGGFGT) show a composition bias toward gly residues. Disordered stretches follow at residues 1-63 (MERG…KERR), 96-124 (WRKLEEQRQREDQKRAAVEEKRKQKLREE), 149-268 (SWGA…DVGK), and 300-540 (PLRR…KQKE). Residues 52–63 (SGERQRLAKERR) are compositionally biased toward basic and acidic residues. Positions 54–147 (ERQRLAKERR…RTQQLELKKK (94 aa)) form a coiled coil. Over residues 192–206 (ESTNACDKLSTSTMS) the composition is skewed to polar residues. Composition is skewed to basic and acidic residues over residues 355 to 371 (MPKRKAEKEKSNKEREG), 385 to 400 (ALEKHVVDKHASEKHA), and 430 to 540 (LAEK…KQKE).

This sequence belongs to the MAP7 family. Interacts (via N-terminus) with microtubules; facilitates microtubule stabilization. Interacts with kinesin-1 family members, KIF5A, KIF5B and KIF5C.

The protein resides in the cytoplasm. It localises to the cytoskeleton. The protein localises to the microtubule organizing center. Its subcellular location is the centrosome. It is found in the midbody. The protein resides in the cell projection. It localises to the neuron projection. The protein localises to the axon. Functionally, microtubule-stabilizing protein involved in the control of cell motility and neurite outgrowth. Acts as a critical cofactor for kinesin transport; in the proximal axon regulates kinesin-1 family members, KIF5A, KIF5B and KIF5C recruitment to microtubules and contributes to kinesin-1-mediated transport in the axons. In Pongo abelii (Sumatran orangutan), this protein is MAP7 domain-containing protein 2 (MAP7D2).